Consider the following 85-residue polypeptide: Small integral membrane protein 2 (85 aa).

Residues 21–43 (GHAISILFGFWTSFICDTYIVLA) traverse the membrane as a helical segment. The segment at 51 to 85 (SPDVSASSDEPYARIQQSRRQCHAEEDQSQVPEAG) is disordered.

It is found in the membrane. The protein is Small integral membrane protein 2 (SMIM2) of Homo sapiens (Human).